A 275-amino-acid chain; its full sequence is Gap junction gamma-3 protein (275 aa).

Topologically, residues 1–22 (MCGSFLRRVAAEESRHPTPVGR) are cytoplasmic. The chain crosses the membrane as a helical span at residues 23 to 43 (LLLPALLGLRLVLLAAGGTGV). The Extracellular segment spans residues 44 to 77 (FGGGEEQSEFVCHTQQAGCKAVCYDAFHPLSPLR). The helical transmembrane segment at 78-98 (FWAFQVTLVAVPSALYMGFIL) threads the bilayer. The Cytoplasmic portion of the chain corresponds to 99 to 134 (YHVIWHWEASEKVKTEEETLSQGEKGGEASRAGSSR). A helical transmembrane segment spans residues 135 to 155 (LLWAYVAQLGVRLALEGAALG). The Extracellular portion of the chain corresponds to 156 to 196 (GQYHLYGFRMPSSFVCRLEPCLGSTNCYLSRPSEKSIFLKT). Residues 197 to 217 (MFGVTGLCLLFTLLELVLLGL) form a helical membrane-spanning segment. Residues 218-275 (GRWWRIWRHKSPSSNYSPTSQSAKRCKAPTDNFPVVEIRERPGEAGERGSEVPLSARP) are Cytoplasmic-facing. The segment covering 254-267 (EIRERPGEAGERGS) has biased composition (basic and acidic residues). The interval 254–275 (EIRERPGEAGERGSEVPLSARP) is disordered.

The protein belongs to the connexin family. Gamma-type subfamily. In terms of assembly, a connexon is composed of a hexamer of connexins.

It localises to the cell membrane. The protein resides in the cell junction. The protein localises to the gap junction. Its function is as follows. One gap junction consists of a cluster of closely packed pairs of transmembrane channels, the connexons, through which materials of low MW diffuse from one cell to a neighboring cell. The chain is Gap junction gamma-3 protein (GJC3) from Bos taurus (Bovine).